Reading from the N-terminus, the 406-residue chain is 2-epi-valiolone synthase (406 aa).

The interval 1–21 (MPSTGSTPILAHDVKSPHRGS) is disordered. NAD(+) is bound by residues 105-108 (EPSK), 137-141 (GVLCD), 161-162 (TS), K174, K183, and 201-204 (CLAT). E216, H287, and H304 together coordinate Zn(2+).

This sequence belongs to the sugar phosphate cyclases superfamily. EVS family. Requires NAD(+) as cofactor. Co(2+) is required as a cofactor. The cofactor is Zn(2+).

It catalyses the reaction D-sedoheptulose 7-phosphate = 2-epi-valiolone + phosphate. In terms of biological role, catalyzes the conversion of sedoheptulose 7-phosphate to 2-epi-valiolone, which may serve as an alternative precursor for aminocyclitol biosynthesis. The chain is 2-epi-valiolone synthase from Stigmatella aurantiaca (strain DW4/3-1).